We begin with the raw amino-acid sequence, 462 residues long: MNKQLTNNGFRLTQRGLQIGKYMYRTYQNVKRIQKGGPDSFKAAEDFVKDTSEIGVIAVKMSQFLSARSDIVDERTLKVIERLQSEVPPEKESPPDFTFYEWYKEPIASASIATVYKGKRKTDNSDVILKRVRPEVKQRIMEDLPLFIIVLDIAKFFGVPGAENMLEIVRECQPVLLGELNLKLEAKAMSLFKKKFASIPWLTIPTVYEAGETYMISEYVPSKKITAAYPNEMLARRLFELYIYMTIDIGLVHADPHAGNIGIKKDGTFVLYDFGAIIDVRDAKQYIAKCLKSVVIGDTDGVVRSLEDMGVIKSGGSVARLKKAIPKIKKIMESEDFNVELSKLPEFTSNENRIFELTTRYIYLIRSLTIVEGIISYHDRDFSLTKYIKKYNDIIDDIVEVPAIDIVKEIAGDFLTTPASLKNMNDLVFSMKDEISTEIADAKKIARYGFAMFLLIEIIKML.

It belongs to the protein kinase superfamily. ADCK protein kinase family.

The protein is Putative ABC transporter A445L of Chlorella (PBCV-1).